The sequence spans 504 residues: L-carnitine/gamma-butyrobetaine antiporter (504 aa).

Transmembrane regions (helical) follow at residues 10-30, 51-71, 92-112, 143-163, 195-215, 231-251, 263-283, 316-336, 347-367, 403-423, 446-466, and 475-495; these read IEPK…WLTV, WGWA…WLVF, IFMM…SIEI, GPLP…FFFV, FYLV…TPLV, LDAI…ACGL, SYLS…SFIM, WTVF…IFLA, LCFG…TVLG, LSTA…VTLI, LLVR…LLAL, and AIIA…LSFI.

The protein belongs to the BCCT transporter (TC 2.A.15) family. CaiT subfamily. As to quaternary structure, homotrimer.

It is found in the cell inner membrane. It catalyses the reaction 4-(trimethylamino)butanoate(in) + (R)-carnitine(out) = 4-(trimethylamino)butanoate(out) + (R)-carnitine(in). It participates in amine and polyamine metabolism; carnitine metabolism. Functionally, catalyzes the exchange of L-carnitine for gamma-butyrobetaine. This is L-carnitine/gamma-butyrobetaine antiporter from Escherichia fergusonii (strain ATCC 35469 / DSM 13698 / CCUG 18766 / IAM 14443 / JCM 21226 / LMG 7866 / NBRC 102419 / NCTC 12128 / CDC 0568-73).